Here is a 400-residue protein sequence, read N- to C-terminus: Snake venom metalloproteinase H2 (400 aa).

The signal sequence occupies residues phenylalanine 1–serine 6. Residues serine 7 to threonine 176 constitute a propeptide that is removed on maturation. Residues arginine 180–proline 377 form the Peptidase M12B domain. The Ca(2+) site is built by glutamate 183 and aspartate 267. Cystine bridges form between cysteine 291/cysteine 372, cysteine 331/cysteine 356, and cysteine 333/cysteine 339. Histidine 316 provides a ligand contact to Zn(2+). Residue glutamate 317 is part of the active site. Residues histidine 320 and histidine 326 each coordinate Zn(2+). Ca(2+) contacts are provided by cysteine 372, asparagine 375, valine 387, asparagine 390, leucine 392, glutamate 394, and aspartate 400. The propeptide occupies leucine 378–aspartate 400.

The protein belongs to the venom metalloproteinase (M12B) family. P-I subfamily. As to quaternary structure, monomer. Zn(2+) serves as cofactor. In terms of tissue distribution, expressed by the venom gland.

The protein resides in the secreted. In terms of biological role, snake venom metalloproteinase that impairs hemostasis in the envenomed animal. The chain is Snake venom metalloproteinase H2 from Deinagkistrodon acutus (Hundred-pace snake).